Here is a 103-residue protein sequence, read N- to C-terminus: Putative protein YmfH (103 aa).

A disordered region spans residues Met-1–Gly-34. Over residues Val-10–Val-20 the composition is skewed to basic and acidic residues. A run of 2 helical transmembrane segments spans residues Met-42–Phe-62 and Gly-73–Glu-93.

It is found in the cell inner membrane. This chain is Putative protein YmfH (ymfH), found in Escherichia coli (strain K12).